Reading from the N-terminus, the 379-residue chain is Armadillo repeat-containing X-linked protein 3 (379 aa).

Topologically, residues 1-6 (MGYARK) are mitochondrial intermembrane. Mitochondrion outer membrane (MOM)-targeting sequence regions lie at residues 1–6 (MGYARK) and 26–37 (RLTRGRKQNKEK). A helical; Signal-anchor membrane pass occupies residues 7-29 (VGWVTAGLVIGAGACYCIYRLTR). Topologically, residues 30-379 (GRKQNKEKMA…TERMFPKSQE (350 aa)) are cytoplasmic. The tract at residues 34–69 (NKEKMAEGGPGDVEDAGDCSGARYNDWSDDDDDSNE) is disordered. Residues Ser61, Ser67, and Ser72 each carry the phosphoserine modification. A nuclear localization signal region spans residues 89–98 (RARARARARA). Ser110 is subject to Phosphoserine. ARM repeat units follow at residues 111 to 151 (PNSD…NNAA), 153 to 192 (AFNR…NLSV), and 233 to 272 (VTNE…NLAE).

The protein belongs to the eutherian X-chromosome-specific Armcx family. Interacts (via ARM domain) with MIRO1, MIRO2 and TRAK2. The interaction with Miro is calcium-dependent. Interacts with Sox10.

It localises to the mitochondrion outer membrane. The protein resides in the cytoplasm. It is found in the nucleus. In terms of biological role, regulates mitochondrial aggregation and transport in axons in living neurons. May link mitochondria to the Trak2-kinesin motor complex via its interaction with Miro and Trak2. Mitochondrial distribution and dynamics is regulated through Armcx3 protein degradation, which is promoted by PCK and negatively regulated by Wnt1. Enhances the Sox10-mediated transactivation of the neuronal acetylcholine receptor subunit alpha-3 and beta-4 subunit gene promoters. This Rattus norvegicus (Rat) protein is Armadillo repeat-containing X-linked protein 3 (Armcx3).